Here is a 354-residue protein sequence, read N- to C-terminus: Probable L-ascorbate-6-phosphate lactonase UlaG (354 aa).

It belongs to the UlaG family. A divalent metal cation serves as cofactor.

It localises to the cytoplasm. It catalyses the reaction L-ascorbate 6-phosphate + H2O = 3-dehydro-L-gulonate 6-phosphate. Its pathway is cofactor degradation; L-ascorbate degradation; D-xylulose 5-phosphate from L-ascorbate: step 1/4. Its function is as follows. Probably catalyzes the hydrolysis of L-ascorbate-6-P into 3-keto-L-gulonate-6-P. Is essential for L-ascorbate utilization under anaerobic conditions. This chain is Probable L-ascorbate-6-phosphate lactonase UlaG, found in Salmonella choleraesuis (strain SC-B67).